The primary structure comprises 107 residues: Quaternary ammonium compound-resistance protein QacH (107 aa).

Transmembrane regions (helical) follow at residues 1-21, 26-46, 57-77, and 84-104; these read MPYL…AFLK, FSKL…FYFL, ITYA…SVLI, and LISI…NTFG.

This sequence belongs to the drug/metabolite transporter (DMT) superfamily. Small multidrug resistance (SMR) (TC 2.A.7.1) family.

Its subcellular location is the cell membrane. In terms of biological role, multidrug exporter. Is implicated for the resistance to bacteriocidal quaternary ammonium compounds. The polypeptide is Quaternary ammonium compound-resistance protein QacH (qacH) (Staphylococcus saprophyticus).